We begin with the raw amino-acid sequence, 725 residues long: Phosphoribosylformylglycinamidine synthase subunit PurL (725 aa).

Histidine 34 is a catalytic residue. Residue tyrosine 37 participates in ATP binding. Glutamate 93 provides a ligand contact to Mg(2+). Substrate contacts are provided by residues 94–97 (SHNH) and arginine 116. Catalysis depends on histidine 95, which acts as the Proton acceptor. A Mg(2+)-binding site is contributed by aspartate 117. The tract at residues 220 to 241 (GASFASEDLSEDAETEDRPAVQ) is disordered. Residue glutamine 241 participates in substrate binding. Aspartate 269 serves as a coordination point for Mg(2+). 313–315 (ESQ) lines the substrate pocket. Residues aspartate 489 and glycine 526 each contribute to the ATP site. Asparagine 527 provides a ligand contact to Mg(2+). Serine 529 is a binding site for substrate.

It belongs to the FGAMS family. As to quaternary structure, monomer. Part of the FGAM synthase complex composed of 1 PurL, 1 PurQ and 2 PurS subunits.

The protein localises to the cytoplasm. It catalyses the reaction N(2)-formyl-N(1)-(5-phospho-beta-D-ribosyl)glycinamide + L-glutamine + ATP + H2O = 2-formamido-N(1)-(5-O-phospho-beta-D-ribosyl)acetamidine + L-glutamate + ADP + phosphate + H(+). It functions in the pathway purine metabolism; IMP biosynthesis via de novo pathway; 5-amino-1-(5-phospho-D-ribosyl)imidazole from N(2)-formyl-N(1)-(5-phospho-D-ribosyl)glycinamide: step 1/2. Part of the phosphoribosylformylglycinamidine synthase complex involved in the purines biosynthetic pathway. Catalyzes the ATP-dependent conversion of formylglycinamide ribonucleotide (FGAR) and glutamine to yield formylglycinamidine ribonucleotide (FGAM) and glutamate. The FGAM synthase complex is composed of three subunits. PurQ produces an ammonia molecule by converting glutamine to glutamate. PurL transfers the ammonia molecule to FGAR to form FGAM in an ATP-dependent manner. PurS interacts with PurQ and PurL and is thought to assist in the transfer of the ammonia molecule from PurQ to PurL. In Haloquadratum walsbyi (strain DSM 16790 / HBSQ001), this protein is Phosphoribosylformylglycinamidine synthase subunit PurL.